A 245-amino-acid polypeptide reads, in one-letter code: tRNA1(Val) (adenine(37)-N6)-methyltransferase (245 aa).

It belongs to the methyltransferase superfamily. tRNA (adenine-N(6)-)-methyltransferase family.

It localises to the cytoplasm. It carries out the reaction adenosine(37) in tRNA1(Val) + S-adenosyl-L-methionine = N(6)-methyladenosine(37) in tRNA1(Val) + S-adenosyl-L-homocysteine + H(+). Its function is as follows. Specifically methylates the adenine in position 37 of tRNA(1)(Val) (anticodon cmo5UAC). This chain is tRNA1(Val) (adenine(37)-N6)-methyltransferase, found in Escherichia fergusonii (strain ATCC 35469 / DSM 13698 / CCUG 18766 / IAM 14443 / JCM 21226 / LMG 7866 / NBRC 102419 / NCTC 12128 / CDC 0568-73).